Consider the following 93-residue polypeptide: Protein FptB (93 aa).

Positions Met1–Thr25 are cleaved as a signal peptide. 2 helical membrane passes run Leu44 to Leu64 and Phe71 to Gly91.

It is found in the cell membrane. May play some role in transport of Fe(3+)-pyochelin. The sequence is that of Protein FptB (fptB) from Pseudomonas aeruginosa (strain ATCC 15692 / DSM 22644 / CIP 104116 / JCM 14847 / LMG 12228 / 1C / PRS 101 / PAO1).